The primary structure comprises 410 residues: Putative competence-damage inducible protein (410 aa).

This sequence belongs to the CinA family.

The chain is Putative competence-damage inducible protein from Clostridium kluyveri (strain NBRC 12016).